The chain runs to 210 residues: 3-hexulose-6-phosphate synthase 1 (210 aa).

It belongs to the HPS/KGPDC family. HPS subfamily.

The catalysed reaction is D-ribulose 5-phosphate + formaldehyde = D-arabino-hex-3-ulose 6-phosphate. It participates in one-carbon metabolism; formaldehyde assimilation via RuMP pathway; D-fructose 6-phosphate from D-ribulose 5-phosphate and formaldehyde: step 1/2. Functionally, catalyzes the condensation of ribulose 5-phosphate with formaldehyde to form 3-hexulose 6-phosphate. The protein is 3-hexulose-6-phosphate synthase 1 of Staphylococcus saprophyticus subsp. saprophyticus (strain ATCC 15305 / DSM 20229 / NCIMB 8711 / NCTC 7292 / S-41).